The sequence spans 299 residues: Ribonuclease Z (299 aa).

H60, H62, D64, H65, H137, D207, and H265 together coordinate Zn(2+). The active-site Proton acceptor is the D64.

It belongs to the RNase Z family. In terms of assembly, homodimer. Requires Zn(2+) as cofactor.

The catalysed reaction is Endonucleolytic cleavage of RNA, removing extra 3' nucleotides from tRNA precursor, generating 3' termini of tRNAs. A 3'-hydroxy group is left at the tRNA terminus and a 5'-phosphoryl group is left at the trailer molecule.. Functionally, zinc phosphodiesterase, which displays some tRNA 3'-processing endonuclease activity. Probably involved in tRNA maturation, by removing a 3'-trailer from precursor tRNA. The chain is Ribonuclease Z from Nitrosopumilus maritimus (strain SCM1).